We begin with the raw amino-acid sequence, 221 residues long: Ribosomal RNA large subunit methyltransferase E (221 aa).

S-adenosyl-L-methionine-binding residues include Gly72, Trp74, Asp91, Asp107, and Asp131. Lys171 functions as the Proton acceptor in the catalytic mechanism.

It belongs to the class I-like SAM-binding methyltransferase superfamily. RNA methyltransferase RlmE family.

The protein localises to the cytoplasm. The catalysed reaction is uridine(2552) in 23S rRNA + S-adenosyl-L-methionine = 2'-O-methyluridine(2552) in 23S rRNA + S-adenosyl-L-homocysteine + H(+). Its function is as follows. Specifically methylates the uridine in position 2552 of 23S rRNA at the 2'-O position of the ribose in the fully assembled 50S ribosomal subunit. This Zymomonas mobilis subsp. mobilis (strain ATCC 31821 / ZM4 / CP4) protein is Ribosomal RNA large subunit methyltransferase E.